Here is a 786-residue protein sequence, read N- to C-terminus: LPS-assembly protein LptD (786 aa).

The signal sequence occupies residues 1 to 24 (MKKRIPTLLATMIASALYSHQGLA). 2 disulfide bridges follow: C31/C726 and C173/C727.

The protein belongs to the LptD family. Component of the lipopolysaccharide transport and assembly complex. Interacts with LptE and LptA. In terms of processing, contains two intramolecular disulfide bonds.

The protein localises to the cell outer membrane. Functionally, together with LptE, is involved in the assembly of lipopolysaccharide (LPS) at the surface of the outer membrane. In Salmonella typhimurium (strain LT2 / SGSC1412 / ATCC 700720), this protein is LPS-assembly protein LptD.